A 602-amino-acid chain; its full sequence is 4-hydroxy-3-methylbut-2-en-1-yl diphosphate synthase (flavodoxin) (602 aa).

[4Fe-4S] cluster is bound by residues C508, C511, C543, and E550.

It belongs to the IspG family. The cofactor is [4Fe-4S] cluster.

It catalyses the reaction (2E)-4-hydroxy-3-methylbut-2-enyl diphosphate + oxidized [flavodoxin] + H2O + 2 H(+) = 2-C-methyl-D-erythritol 2,4-cyclic diphosphate + reduced [flavodoxin]. Its pathway is isoprenoid biosynthesis; isopentenyl diphosphate biosynthesis via DXP pathway; isopentenyl diphosphate from 1-deoxy-D-xylulose 5-phosphate: step 5/6. In terms of biological role, converts 2C-methyl-D-erythritol 2,4-cyclodiphosphate (ME-2,4cPP) into 1-hydroxy-2-methyl-2-(E)-butenyl 4-diphosphate. This chain is 4-hydroxy-3-methylbut-2-en-1-yl diphosphate synthase (flavodoxin), found in Chlamydia trachomatis serovar D (strain ATCC VR-885 / DSM 19411 / UW-3/Cx).